The sequence spans 116 residues: Ly-6/neurotoxin-like protein 1 (116 aa).

A signal peptide spans 1–20 (MTPLLTLILVVLMGLPLAQA). One can recognise a UPAR/Ly6 domain in the interval 21 to 107 (LDCHVCAYNG…TPATLALAPI (87 aa)). Cystine bridges form between cysteine 23-cysteine 46, cysteine 26-cysteine 33, cysteine 39-cysteine 64, cysteine 68-cysteine 85, and cysteine 86-cysteine 91. Cysteine 91 carries the GPI-anchor amidated cysteine lipid modification. A propeptide spans 92–116 (NGTGLATPATLALAPILLATLWGLL) (removed in mature form).

Interacts with nAChRs containing alpha-4:beta-2 (CHRNA4:CHRNB2) and alpha-7 (CHRNA7) subunits. Interacts with CHRNA4 probably in the endoplasmic reticulum prior to nAChR pentameric assembly. Interacts with KCNA2/Potassium voltage-gated channel subfamily A member 2.

The protein resides in the cell membrane. The protein localises to the cell projection. It is found in the dendrite. Its subcellular location is the endoplasmic reticulum. In terms of biological role, acts in different tissues through interaction to nicotinic acetylcholine receptors (nAChRs). The proposed role as modulator of nAChR activity seems to be dependent on the nAChR subtype and stoichiometry, and to involve an effect on nAChR trafficking and its cell surface expression, and on single channel properties of the nAChR inserted in the plasma membrane. Modulates functional properties of nicotinic acetylcholine receptors (nAChRs) to prevent excessive excitation, and hence neurodegeneration. Enhances desensitization by increasing both the rate and extent of desensitization of alpha-4:beta-2-containing nAChRs and slowing recovery from desensitization. Promotes large amplitude ACh-evoked currents through alpha-4:beta-2 nAChRs. Is involved in regulation of the nAChR pentameric assembly in the endoplasmic reticulum. Shifts stoichiometry from high sensitivity alpha-4(2):beta-2(3) to low sensitivity alpha-4(3):beta-2(2) nAChR. In vitro modulates alpha-3:beta-4-containing nAChRs. Reduces cell surface expression of (alpha-3:beta-4)(2):beta-4 and (alpha-3:beta-4)(2):alpha-5 nAChRs suggesting an interaction with nAChR alpha-3(-):(+)beta-4 subunit interfaces and an allosteric mode. Corresponding single channel effects characterized by decreased unitary conductance, altered burst proportions and enhanced desensitization/inactivation seem to depend on nAChR alpha:alpha subunit interfaces and are greater in (alpha-3:beta-2)(2):alpha-3 when compared to (alpha-3:beta-2)(2):alpha-5 nAChRs. Prevents plasticity in the primary visual cortex late in life. This Homo sapiens (Human) protein is Ly-6/neurotoxin-like protein 1.